Here is a 283-residue protein sequence, read N- to C-terminus: Fructose-1,6-bisphosphatase class 1 (283 aa).

Residues glutamate 67, aspartate 86, leucine 88, and aspartate 89 each contribute to the Mg(2+) site. Substrate-binding positions include 89–92 (DGSS), tyrosine 195, and lysine 225. Glutamate 231 contributes to the Mg(2+) binding site.

The protein belongs to the FBPase class 1 family. Homotetramer. It depends on Mg(2+) as a cofactor.

It localises to the cytoplasm. The enzyme catalyses beta-D-fructose 1,6-bisphosphate + H2O = beta-D-fructose 6-phosphate + phosphate. It participates in carbohydrate biosynthesis; gluconeogenesis. The sequence is that of Fructose-1,6-bisphosphatase class 1 from Natronomonas pharaonis (strain ATCC 35678 / DSM 2160 / CIP 103997 / JCM 8858 / NBRC 14720 / NCIMB 2260 / Gabara) (Halobacterium pharaonis).